The primary structure comprises 358 residues: Phosphoribosyl pyrophosphate synthase-associated protein 2 (358 aa).

This sequence belongs to the ribose-phosphate pyrophosphokinase family.

Its function is as follows. Seems to play a negative regulatory role in 5-phosphoribose 1-diphosphate synthesis. This chain is Phosphoribosyl pyrophosphate synthase-associated protein 2 (prpsap2), found in Xenopus tropicalis (Western clawed frog).